The sequence spans 389 residues: Leucine aminopeptidase 1 (389 aa).

The N-terminal stretch at 1 to 18 is a signal peptide; it reads MKSAALLLPLYAAAFAAA. A propeptide spanning residues 19–89 is cleaved from the precursor; sequence AFHHEHAQAV…TLKRRINAAS (71 aa). N99 is a glycosylation site (N-linked (GlcNAc...) asparagine). Positions 188, 207, 246, and 273 each coordinate Zn(2+). Cysteines 322 and 326 form a disulfide. Position 355 (H355) interacts with Zn(2+).

The protein belongs to the peptidase M28 family. M28E subfamily. As to quaternary structure, monomer. Zn(2+) is required as a cofactor.

It is found in the secreted. Extracellular aminopeptidase that allows assimilation of proteinaceous substrates. This chain is Leucine aminopeptidase 1 (lap1), found in Pyrenophora teres f. teres (strain 0-1) (Barley net blotch fungus).